The chain runs to 470 residues: Ribulose bisphosphate carboxylase large chain (470 aa).

At Lys-5 the chain carries N6,N6,N6-trimethyllysine. 2 residues coordinate substrate: Asn-114 and Thr-164. Lys-166 functions as the Proton acceptor in the catalytic mechanism. Lys-168 contributes to the substrate binding site. Mg(2+) is bound by residues Lys-192, Asp-194, and Glu-195. Lys-192 is subject to N6-carboxylysine. His-285 (proton acceptor) is an active-site residue. Substrate is bound by residues Arg-286, His-318, and Ser-370.

It belongs to the RuBisCO large chain family. Type I subfamily. In terms of assembly, heterohexadecamer of 8 large chains and 8 small chains; disulfide-linked. The disulfide link is formed within the large subunit homodimers. It depends on Mg(2+) as a cofactor. The disulfide bond which can form in the large chain dimeric partners within the hexadecamer appears to be associated with oxidative stress and protein turnover.

Its subcellular location is the plastid. The protein localises to the chloroplast. The catalysed reaction is 2 (2R)-3-phosphoglycerate + 2 H(+) = D-ribulose 1,5-bisphosphate + CO2 + H2O. It carries out the reaction D-ribulose 1,5-bisphosphate + O2 = 2-phosphoglycolate + (2R)-3-phosphoglycerate + 2 H(+). Functionally, ruBisCO catalyzes two reactions: the carboxylation of D-ribulose 1,5-bisphosphate, the primary event in carbon dioxide fixation, as well as the oxidative fragmentation of the pentose substrate in the photorespiration process. Both reactions occur simultaneously and in competition at the same active site. The chain is Ribulose bisphosphate carboxylase large chain from Bertiera breviflora.